The chain runs to 624 residues: MELPGSLCKKAKLGHGAQSWGMQRATNVTYQAHHVSRNKRGQVVGTRGGFRGCTVWLTGLSGAGKTTVSMALGEHLVCHGIPCYTLDGDNIRQGLNKNLGFSPEDREENVRRIAEVAKLFADAGLVCITSFISPYTQDRNNARQIHEGASLPFFEVFVDAPLHVCEQRDVKGLYKKARAGEIKGFTGIDSEYEKPEAPELVLKTDACDVNDCVQQVVELLQERDIVPVDASYEVKELYVPENKLHLAKTDAESLPALQINKVDMQWVQVLAEGWATPLGGFMREREYLQCLHFDCLLDGGVINLSVPIVLTATEEDKERLDGCTAFALIYEGRRVAILRNPEFFEHRKEERCARQWGTTCKSHPYIKMVMEQGDWLIGGDLQVLDRIYWNDGLDQYRLTPTELKQKFKDMNADAVFAFQLRNPVHNGHALLMQDTHRQLLERGYRRPVLLLHPLGGWTKDDDVPLMWRMKQHAAVLEEGILNPESTVVAIFPSPMMYAGPTGVQWHCRARMVAGANFYIVGRDPAGMPHPETGKDLYKPTHGAKVLTMAPGLITLEIVPFRVAAYNKRKKRMDYYDAEHHEDFEFISGTRMRRLAREGQKPPEGFMAPTAWAVLAEYYKALEKA.

N-acetylmethionine is present on Met-1. An adenylyl-sulfate kinase region spans residues 1–225 (MELPGSLCKK…VVELLQERDI (225 aa)). Lys-12 bears the N6-acetyllysine mark. Position 62–67 (62–67 (GAGKTT)) interacts with ATP. Adenosine 5'-phosphosulfate-binding positions include 89–92 (DNIR), Phe-101, 106–109 (REEN), 132–133 (IS), Lys-171, and 184–185 (GF). Residues Cys-207, Cys-212, 419 to 422 (QLRN), 521 to 525 (GRDPA), and Ala-563 contribute to the ATP site. A sulfate adenylyltransferase region spans residues 234–624 (VKELYVPENK…AEYYKALEKA (391 aa)).

The protein in the N-terminal section; belongs to the APS kinase family. It in the C-terminal section; belongs to the sulfate adenylyltransferase family. In terms of assembly, homodimer.

It carries out the reaction sulfate + ATP + H(+) = adenosine 5'-phosphosulfate + diphosphate. It catalyses the reaction adenosine 5'-phosphosulfate + ATP = 3'-phosphoadenylyl sulfate + ADP + H(+). It functions in the pathway sulfur metabolism; sulfate assimilation. Its function is as follows. Bifunctional enzyme with both ATP sulfurylase and APS kinase activity, which mediates two steps in the sulfate activation pathway. The first step is the transfer of a sulfate group to ATP to yield adenosine 5'-phosphosulfate (APS), and the second step is the transfer of a phosphate group from ATP to APS yielding 3'-phosphoadenylylsulfate (PAPS: activated sulfate donor used by sulfotransferase). In mammals, PAPS is the sole source of sulfate; APS appears to be only an intermediate in the sulfate-activation pathway. Required for normal biosynthesis of sulfated L-selectin ligands in endothelial cells. In Cavia porcellus (Guinea pig), this protein is Bifunctional 3'-phosphoadenosine 5'-phosphosulfate synthase 1 (PAPSS1).